We begin with the raw amino-acid sequence, 96 residues long: uncharacterized protein (96 aa).

A signal peptide spans 1 to 28 (MNKKAIVGIFMSILMAGLVGCAGSSDAQ).

This is an uncharacterized protein from Butyrivibrio fibrisolvens.